The sequence spans 361 residues: Phosphoserine aminotransferase (361 aa).

Arg-43 serves as a coordination point for L-glutamate. Pyridoxal 5'-phosphate is bound by residues 77-78 (AS), Trp-103, Thr-152, Asp-172, and Gln-195. The residue at position 196 (Lys-196) is an N6-(pyridoxal phosphate)lysine. 237–238 (NT) provides a ligand contact to pyridoxal 5'-phosphate.

It belongs to the class-V pyridoxal-phosphate-dependent aminotransferase family. SerC subfamily. As to quaternary structure, homodimer. It depends on pyridoxal 5'-phosphate as a cofactor.

The protein localises to the cytoplasm. It catalyses the reaction O-phospho-L-serine + 2-oxoglutarate = 3-phosphooxypyruvate + L-glutamate. The catalysed reaction is 4-(phosphooxy)-L-threonine + 2-oxoglutarate = (R)-3-hydroxy-2-oxo-4-phosphooxybutanoate + L-glutamate. Its pathway is amino-acid biosynthesis; L-serine biosynthesis; L-serine from 3-phospho-D-glycerate: step 2/3. It functions in the pathway cofactor biosynthesis; pyridoxine 5'-phosphate biosynthesis; pyridoxine 5'-phosphate from D-erythrose 4-phosphate: step 3/5. Catalyzes the reversible conversion of 3-phosphohydroxypyruvate to phosphoserine and of 3-hydroxy-2-oxo-4-phosphonooxybutanoate to phosphohydroxythreonine. In Desulfatibacillum aliphaticivorans, this protein is Phosphoserine aminotransferase.